We begin with the raw amino-acid sequence, 187 residues long: Adenine phosphoribosyltransferase 1 (187 aa).

Ser-68 bears the Phosphoserine mark. Residue 133 to 137 (ATGGS) participates in AMP binding.

Belongs to the purine/pyrimidine phosphoribosyltransferase family. As to quaternary structure, homodimer. Requires Mg(2+) as cofactor.

It is found in the cytoplasm. The protein resides in the nucleus. The catalysed reaction is AMP + diphosphate = 5-phospho-alpha-D-ribose 1-diphosphate + adenine. Its pathway is purine metabolism; AMP biosynthesis via salvage pathway; AMP from adenine: step 1/1. Catalyzes a salvage reaction resulting in the formation of AMP, that is energically less costly than de novo synthesis. In Saccharomyces cerevisiae (strain ATCC 204508 / S288c) (Baker's yeast), this protein is Adenine phosphoribosyltransferase 1.